We begin with the raw amino-acid sequence, 491 residues long: Aspartyl/glutamyl-tRNA(Asn/Gln) amidotransferase subunit B (491 aa).

The protein belongs to the GatB/GatE family. GatB subfamily. Heterotrimer of A, B and C subunits.

The enzyme catalyses L-glutamyl-tRNA(Gln) + L-glutamine + ATP + H2O = L-glutaminyl-tRNA(Gln) + L-glutamate + ADP + phosphate + H(+). It carries out the reaction L-aspartyl-tRNA(Asn) + L-glutamine + ATP + H2O = L-asparaginyl-tRNA(Asn) + L-glutamate + ADP + phosphate + 2 H(+). In terms of biological role, allows the formation of correctly charged Asn-tRNA(Asn) or Gln-tRNA(Gln) through the transamidation of misacylated Asp-tRNA(Asn) or Glu-tRNA(Gln) in organisms which lack either or both of asparaginyl-tRNA or glutaminyl-tRNA synthetases. The reaction takes place in the presence of glutamine and ATP through an activated phospho-Asp-tRNA(Asn) or phospho-Glu-tRNA(Gln). This is Aspartyl/glutamyl-tRNA(Asn/Gln) amidotransferase subunit B from Burkholderia ambifaria (strain ATCC BAA-244 / DSM 16087 / CCUG 44356 / LMG 19182 / AMMD) (Burkholderia cepacia (strain AMMD)).